The sequence spans 217 residues: Pyrophosphatase PpaX (217 aa).

The active-site Nucleophile is aspartate 11.

This sequence belongs to the HAD-like hydrolase superfamily. PpaX family. It depends on Mg(2+) as a cofactor.

The enzyme catalyses diphosphate + H2O = 2 phosphate + H(+). Functionally, hydrolyzes pyrophosphate formed during P-Ser-HPr dephosphorylation by HPrK/P. Might play a role in controlling the intracellular pyrophosphate pool. In Listeria welshimeri serovar 6b (strain ATCC 35897 / DSM 20650 / CCUG 15529 / CIP 8149 / NCTC 11857 / SLCC 5334 / V8), this protein is Pyrophosphatase PpaX.